A 459-amino-acid polypeptide reads, in one-letter code: Adenylosuccinate synthetase isozyme 1 C (459 aa).

A disordered region spans residues 1–31 (MSFSWSAKDHKSYTNPPSNPTQGLKRPRNDT). Positions 13-22 (YTNPPSNPTQ) are enriched in polar residues. GTP is bound by residues 44-50 (GDEGKGK) and 72-74 (GHT). The active-site Proton acceptor is Asp45. Mg(2+) is bound by residues Asp45 and Gly72. Asp45 contacts substrate. IMP contacts are provided by residues 45 to 48 (DEGK), 70 to 73 (NAGH), Thr165, Arg179, Asn258, Thr273, and Arg337. Catalysis depends on His73, which acts as the Proton donor. 333-339 (VTTGRKR) is a substrate binding site. GTP is bound by residues Arg339, 365-367 (KLD), and 447-450 (GVGK).

This sequence belongs to the adenylosuccinate synthetase family. As to quaternary structure, homodimer. The cofactor is Mg(2+).

It localises to the cytoplasm. It carries out the reaction IMP + L-aspartate + GTP = N(6)-(1,2-dicarboxyethyl)-AMP + GDP + phosphate + 2 H(+). It functions in the pathway purine metabolism; AMP biosynthesis via de novo pathway; AMP from IMP: step 1/2. In terms of biological role, component of the purine nucleotide cycle (PNC), which interconverts IMP and AMP to regulate the nucleotide levels in various tissues, and which contributes to glycolysis and ammoniagenesis. Catalyzes the first committed step in the biosynthesis of AMP from IMP. The chain is Adenylosuccinate synthetase isozyme 1 C (adss1c) from Salmo salar (Atlantic salmon).